A 688-amino-acid polypeptide reads, in one-letter code: Glycine--tRNA ligase beta subunit (688 aa).

Belongs to the class-II aminoacyl-tRNA synthetase family. In terms of assembly, tetramer of two alpha and two beta subunits.

Its subcellular location is the cytoplasm. It catalyses the reaction tRNA(Gly) + glycine + ATP = glycyl-tRNA(Gly) + AMP + diphosphate. This chain is Glycine--tRNA ligase beta subunit, found in Haemophilus influenzae (strain PittGG).